Consider the following 351-residue polypeptide: Dihydroorotate dehydrogenase (quinone) (351 aa).

Residues 61-65 (AGLDK) and T85 each bind FMN. K65 lines the substrate pocket. 110–114 (NRMGF) is a substrate binding site. The FMN site is built by N139 and N172. N172 is a binding site for substrate. Catalysis depends on S175, which acts as the Nucleophile. N177 serves as a coordination point for substrate. FMN-binding residues include K217 and T245. Residue 246-247 (NT) participates in substrate binding. Residues G268, G297, and 318-319 (YS) each bind FMN.

It belongs to the dihydroorotate dehydrogenase family. Type 2 subfamily. Monomer. FMN serves as cofactor.

It localises to the cell membrane. The enzyme catalyses (S)-dihydroorotate + a quinone = orotate + a quinol. It functions in the pathway pyrimidine metabolism; UMP biosynthesis via de novo pathway; orotate from (S)-dihydroorotate (quinone route): step 1/1. Functionally, catalyzes the conversion of dihydroorotate to orotate with quinone as electron acceptor. The chain is Dihydroorotate dehydrogenase (quinone) from Xanthomonas axonopodis pv. citri (strain 306).